Reading from the N-terminus, the 92-residue chain is MKLRKVLTGSVLSLGLLVSASPAFATSPSAMVKENNIVQDEISVKELHTKYIYHHNINDFKNIEKDENGRNWYLKGIEYKDGWYVGKYQANY.

Positions methionine 1 to alanine 25 are cleaved as a signal peptide.

The sequence is that of SPbeta prophage-derived uncharacterized protein YoqM (yoqM) from Bacillus subtilis (strain 168).